Here is a 285-residue protein sequence, read N- to C-terminus: Urease accessory protein UreD (285 aa).

Belongs to the UreD family. UreD, UreF and UreG form a complex that acts as a GTP-hydrolysis-dependent molecular chaperone, activating the urease apoprotein by helping to assemble the nickel containing metallocenter of UreC. The UreE protein probably delivers the nickel.

The protein resides in the cytoplasm. Required for maturation of urease via the functional incorporation of the urease nickel metallocenter. The protein is Urease accessory protein UreD of Azoarcus sp. (strain BH72).